We begin with the raw amino-acid sequence, 328 residues long: Arylacetonitrilase (328 aa).

Residues Val-5–Phe-278 enclose the CN hydrolase domain. The active-site Proton acceptor is the Glu-45. The active site involves Lys-125. The active-site Nucleophile is the Cys-160.

Belongs to the carbon-nitrogen hydrolase superfamily. Nitrilase family.

The catalysed reaction is a nitrile + 2 H2O = a carboxylate + NH4(+). It catalyses the reaction 4-chlorophenylacetonitrile + 2 H2O = 4-chlorophenylacetate + NH4(+). Nitrilase that hydrolyzes preferentially phenylacetonitrile, (R,S)-mandelonitrile, and 3-indolylacetonitrile. The polypeptide is Arylacetonitrilase (Aspergillus niger (strain ATCC MYA-4892 / CBS 513.88 / FGSC A1513)).